Reading from the N-terminus, the 218-residue chain is Sec-independent protein translocase protein TatB (218 aa).

Residues 1 to 21 (MFDIGFSELLLVLVIGLVVLG) form a helical membrane-spanning segment. Disordered stretches follow at residues 126–145 (AESA…DVDK) and 174–218 (SSVD…GGDR). The segment covering 199–218 (HSTDSHGADQPRTHQPGGDR) has biased composition (basic and acidic residues).

It belongs to the TatB family. In terms of assembly, the Tat system comprises two distinct complexes: a TatABC complex, containing multiple copies of TatA, TatB and TatC subunits, and a separate TatA complex, containing only TatA subunits. Substrates initially bind to the TatABC complex, which probably triggers association of the separate TatA complex to form the active translocon.

It is found in the cell inner membrane. Its function is as follows. Part of the twin-arginine translocation (Tat) system that transports large folded proteins containing a characteristic twin-arginine motif in their signal peptide across membranes. Together with TatC, TatB is part of a receptor directly interacting with Tat signal peptides. TatB may form an oligomeric binding site that transiently accommodates folded Tat precursor proteins before their translocation. This Yersinia enterocolitica serotype O:8 / biotype 1B (strain NCTC 13174 / 8081) protein is Sec-independent protein translocase protein TatB.